Reading from the N-terminus, the 244-residue chain is Tetraspanin-7 (244 aa).

Topologically, residues 1-11 are cytoplasmic; that stretch reads METKPVITCLK. The chain crosses the membrane as a helical span at residues 12-35; it reads TLLIIYSFVFWITGVILLAVGVWG. Over 36–51 the chain is Extracellular; the sequence is KLTLGTYISLIAENST. An N-linked (GlcNAc...) asparagine glycan is attached at N49. A helical membrane pass occupies residues 52 to 70; it reads NAPYVLIGTGTTIVVFGLF. The Cytoplasmic portion of the chain corresponds to 71–81; that stretch reads GCFATCRGSPW. A helical membrane pass occupies residues 82–107; that stretch reads MLKLYAMFLSLVFLAELVAGISGFVF. The Extracellular segment spans residues 108 to 208; it reads RHEIKDTFLR…LVTSFMETNM (101 aa). N150, N153, N172, and N183 each carry an N-linked (GlcNAc...) asparagine glycan. A helical membrane pass occupies residues 209–229; that stretch reads GIIAGVAFGIAFSQLIGMLLA. Residues 230 to 244 lie on the Cytoplasmic side of the membrane; sequence CCLSRFITANQYEMV.

The protein belongs to the tetraspanin (TM4SF) family.

Its subcellular location is the membrane. Functionally, may be involved in cell proliferation and cell motility. This Pan troglodytes (Chimpanzee) protein is Tetraspanin-7 (TSPAN7).